The primary structure comprises 194 residues: MTYLGSIEALLFVAGEDGLSLRQMAELLSLTPSALIQQLEKLAKRYEEDDDSSLLLLETAQTYKLVTKDSYMTLLRDYAKAPINQSLSRASLEVLSIIAYKQPITRIEIDDIRGVNSSGAITRLIAFGLIKEAGKKEVLGRPNLYETTNYFLDYMGINQLDDLIDASSIELVDEEVSLFSMDSINTEDKENNEN.

It belongs to the ScpB family. Homodimer. Homodimerization may be required to stabilize the binding of ScpA to the Smc head domains. Component of a cohesin-like complex composed of ScpA, ScpB and the Smc homodimer, in which ScpA and ScpB bind to the head domain of Smc. The presence of the three proteins is required for the association of the complex with DNA.

The protein localises to the cytoplasm. Functionally, participates in chromosomal partition during cell division. May act via the formation of a condensin-like complex containing Smc and ScpA that pull DNA away from mid-cell into both cell halves. The sequence is that of Segregation and condensation protein B from Streptococcus agalactiae serotype Ia (strain ATCC 27591 / A909 / CDC SS700).